The following is a 184-amino-acid chain: NEDD8-conjugating enzyme UBC12 (184 aa).

The tract at residues 10 to 29 (EKQRQAAQAQAPAQGRSAAS) is disordered. The segment covering 14-29 (QAAQAQAPAQGRSAAS) has biased composition (low complexity). A UBC core domain is found at 30–174 (PAQLRVEKDL…VQATMMGGHL (145 aa)). The active-site Glycyl thioester intermediate is Cys-112.

It belongs to the ubiquitin-conjugating enzyme family. UBC12 subfamily.

It catalyses the reaction [E1 NEDD8-activating enzyme]-S-[NEDD8 protein]-yl-L-cysteine + [E2 NEDD8-conjugating enzyme]-L-cysteine = [E1 NEDD8-activating enzyme]-L-cysteine + [E2 NEDD8-conjugating enzyme]-S-[NEDD8-protein]-yl-L-cysteine.. Its pathway is protein modification; protein neddylation. Its function is as follows. Accepts the ubiquitin-like protein NEDD8/RUB1 from the UBA3-ULA1 E1 complex and catalyzes its covalent attachment to other proteins. The polypeptide is NEDD8-conjugating enzyme UBC12 (UBC12) (Eremothecium gossypii (strain ATCC 10895 / CBS 109.51 / FGSC 9923 / NRRL Y-1056) (Yeast)).